Reading from the N-terminus, the 748-residue chain is Transcription factor hmgR (748 aa).

A DNA-binding region (zn(2)-C6 fungal-type) is located at residues 24–59; that stretch reads CISCRQRKAKCDLGTGPDGLPLGPPCAKCRREQKPC. Disordered stretches follow at residues 108–142 and 661–683; these read SQED…QIDL and REST…DEHA.

The protein localises to the nucleus. Its function is as follows. Transcription factor; part of the L-tyrosine degradation gene cluster that mediates the biosynthesis of the brownish pigment pyomelanin as an alternative melanin. Acts as a transcriptional activator for the genes of the tyrosine degradation cluster. The protein is Transcription factor hmgR of Aspergillus fumigatus (strain ATCC MYA-4609 / CBS 101355 / FGSC A1100 / Af293) (Neosartorya fumigata).